Here is a 638-residue protein sequence, read N- to C-terminus: 1-deoxy-D-xylulose-5-phosphate synthase (638 aa).

Thiamine diphosphate contacts are provided by residues His76 and 117–119 (AHS). Asp148 is a binding site for Mg(2+). Thiamine diphosphate is bound by residues 149 to 150 (GS), Asn177, Tyr287, and Glu369. Position 177 (Asn177) interacts with Mg(2+).

This sequence belongs to the transketolase family. DXPS subfamily. In terms of assembly, homodimer. Mg(2+) is required as a cofactor. Thiamine diphosphate serves as cofactor.

The enzyme catalyses D-glyceraldehyde 3-phosphate + pyruvate + H(+) = 1-deoxy-D-xylulose 5-phosphate + CO2. It participates in metabolic intermediate biosynthesis; 1-deoxy-D-xylulose 5-phosphate biosynthesis; 1-deoxy-D-xylulose 5-phosphate from D-glyceraldehyde 3-phosphate and pyruvate: step 1/1. Catalyzes the acyloin condensation reaction between C atoms 2 and 3 of pyruvate and glyceraldehyde 3-phosphate to yield 1-deoxy-D-xylulose-5-phosphate (DXP). This chain is 1-deoxy-D-xylulose-5-phosphate synthase, found in Rhodopseudomonas palustris (strain BisB5).